Reading from the N-terminus, the 1268-residue chain is Meiosis inhibitor protein 1 (1268 aa).

As to expression, strongly expressed in testis, weakly in brain, and not detected in spleen, liver, kidney, small intestine or colon.

Required for normal meiotic chromosome synapsis. May be involved in the formation of meiotic double-strand breaks (DSBs) in spermatocytes. The chain is Meiosis inhibitor protein 1 from Mus musculus (Mouse).